The chain runs to 119 residues: Fluoride-specific ion channel FluC 1 (119 aa).

Transmembrane regions (helical) follow at residues 6–26 (VALVAGGGFAGALCRHGIAVV), 31–51 (FPWGTLVVNVAGAFLLGAIVY), 66–86 (VVATGFLSSFTTYSTFAGETI), and 91–111 (RLAALNVVGNYALGFVAVLVA).

It belongs to the fluoride channel Fluc/FEX (TC 1.A.43) family.

It is found in the cell membrane. The enzyme catalyses fluoride(in) = fluoride(out). Fluoride-specific ion channel. Important for reducing fluoride concentration in the cell, thus reducing its toxicity. This chain is Fluoride-specific ion channel FluC 1, found in Natronomonas pharaonis (strain ATCC 35678 / DSM 2160 / CIP 103997 / JCM 8858 / NBRC 14720 / NCIMB 2260 / Gabara) (Halobacterium pharaonis).